Consider the following 62-residue polypeptide: Conotoxin Im11.9 (62 aa).

An N-terminal signal peptide occupies residues 1 to 22; that stretch reads MFRVTSVLLVIVLLNLVVLTNA. 4 cysteine pairs are disulfide-bonded: Cys23-Cys33, Cys27-Cys38, Cys32-Cys41, and Cys37-Cys46. Residues 23–49 constitute a propeptide that is removed on maturation; that stretch reads CHMDCSKMTCCSGICCFYCGRPMCPGT.

This sequence belongs to the conotoxin I2 superfamily. As to expression, expressed by the venom duct.

Its subcellular location is the secreted. Functionally, probable neurotoxin. This is Conotoxin Im11.9 from Conus imperialis (Imperial cone).